Consider the following 265-residue polypeptide: tRNA pseudouridine synthase A (265 aa).

The Nucleophile role is filled by Asp-53. Tyr-111 contributes to the substrate binding site.

The protein belongs to the tRNA pseudouridine synthase TruA family. Homodimer.

It catalyses the reaction uridine(38/39/40) in tRNA = pseudouridine(38/39/40) in tRNA. Its function is as follows. Formation of pseudouridine at positions 38, 39 and 40 in the anticodon stem and loop of transfer RNAs. This Acinetobacter baumannii (strain AB307-0294) protein is tRNA pseudouridine synthase A.